A 211-amino-acid chain; its full sequence is ATP-dependent Clp protease proteolytic subunit (211 aa).

The active-site Nucleophile is Ser-106. His-131 is a catalytic residue.

It belongs to the peptidase S14 family. As to quaternary structure, fourteen ClpP subunits assemble into 2 heptameric rings which stack back to back to give a disk-like structure with a central cavity, resembling the structure of eukaryotic proteasomes.

It localises to the cytoplasm. The catalysed reaction is Hydrolysis of proteins to small peptides in the presence of ATP and magnesium. alpha-casein is the usual test substrate. In the absence of ATP, only oligopeptides shorter than five residues are hydrolyzed (such as succinyl-Leu-Tyr-|-NHMec, and Leu-Tyr-Leu-|-Tyr-Trp, in which cleavage of the -Tyr-|-Leu- and -Tyr-|-Trp bonds also occurs).. Its function is as follows. Cleaves peptides in various proteins in a process that requires ATP hydrolysis. Has a chymotrypsin-like activity. Plays a major role in the degradation of misfolded proteins. The polypeptide is ATP-dependent Clp protease proteolytic subunit (Rhodopseudomonas palustris (strain BisA53)).